Reading from the N-terminus, the 647-residue chain is Phosphomethylpyrimidine synthase (647 aa).

Substrate is bound by residues Asn235, Met264, Tyr293, His329, 349-351 (SRG), 390-393 (DGLR), and Glu429. His433 provides a ligand contact to Zn(2+). Tyr456 is a binding site for substrate. His497 contributes to the Zn(2+) binding site. 3 residues coordinate [4Fe-4S] cluster: Cys577, Cys580, and Cys585. Residues 623–647 (KSAEFKASGSELYHPAVSHEEVAEG) form a disordered region.

It belongs to the ThiC family. Homodimer. Requires [4Fe-4S] cluster as cofactor.

The catalysed reaction is 5-amino-1-(5-phospho-beta-D-ribosyl)imidazole + S-adenosyl-L-methionine = 4-amino-2-methyl-5-(phosphooxymethyl)pyrimidine + CO + 5'-deoxyadenosine + formate + L-methionine + 3 H(+). Its pathway is cofactor biosynthesis; thiamine diphosphate biosynthesis. In terms of biological role, catalyzes the synthesis of the hydroxymethylpyrimidine phosphate (HMP-P) moiety of thiamine from aminoimidazole ribotide (AIR) in a radical S-adenosyl-L-methionine (SAM)-dependent reaction. The protein is Phosphomethylpyrimidine synthase of Vibrio vulnificus (strain CMCP6).